Reading from the N-terminus, the 209-residue chain is Guanylyl cyclase-activating protein 3 (209 aa).

Gly2 is lipidated: N-myristoyl glycine. Deamidated asparagine is present on Asn3. 4 consecutive EF-hand domains span residues 15–50, 52–87, 88–123, and 130–165; these read PTQE…QGLN, KANK…IMQE, KMEQ…VQAL, and SPEE…DQDL. Ca(2+) contacts are provided by Asp65, Asn67, Asp69, Glu76, Asp101, Asp103, Asn105, Ser107, Glu112, Asp143, Asn145, Asp147, Glu149, and Glu154. The interval 187-209 is disordered; that stretch reads QPDMETDSSKSPDKAGLGKVKMK.

In terms of tissue distribution, retina.

In terms of biological role, stimulates guanylyl cyclase 1 (GC1) and GC2 when free calcium ions concentration is low and inhibits guanylyl cyclases when free calcium ions concentration is elevated. This Ca(2+)-sensitive regulation of guanylyl cyclase (GC) is a key event in recovery of the dark state of rod photoreceptors following light exposure. This chain is Guanylyl cyclase-activating protein 3 (GUCA1C), found in Homo sapiens (Human).